Reading from the N-terminus, the 365-residue chain is Nicotinate N-methyltransferase 1 (365 aa).

Residue aspartate 232 coordinates S-adenosyl-L-methionine.

The protein belongs to the class I-like SAM-binding methyltransferase superfamily. Cation-independent O-methyltransferase family.

It catalyses the reaction nicotinate + S-adenosyl-L-methionine = N-methylnicotinate + S-adenosyl-L-homocysteine. Functionally, involved in nicotinate detoxification in planta. Catalyzes the conversion of nicotinate to N-methylnicotinate, which is a detoxified form of endogenous nicotinate in planta. The sequence is that of Nicotinate N-methyltransferase 1 from Oryza sativa subsp. japonica (Rice).